The primary structure comprises 174 residues: Centrosomal protein 20 (174 aa).

The interval 1 to 104 is necessary and sufficient for homooligomerization and localization to centrosomes and pericentriolar satellites; sequence MATVTELKAV…AFEESKDNSI (104 aa). The LisH domain occupies 49 to 81; that stretch reads ENLLINELIREYLEFNKYKYTASVLIAESGQPV. Residues 136 to 174 form a disordered region; sequence TKHLSWKPSRRPDDDHVRKDTGPRTTTEELPAAAQAVSR. At Ser144 the chain carries Phosphoserine. Positions 145-157 are enriched in basic and acidic residues; that stretch reads RRPDDDHVRKDTG.

The protein belongs to the CEP43 family. As to quaternary structure, homooligomer; probably required for localization to centrosomes. Forms a complex with KIAA0753/OFIP and OFD1; within this complex may stabilize the interaction between OFD1 and KIAA0753/OFIP. Interacts with PCM1; this interaction may be mediated by KIAA0753/OFIP.

Its subcellular location is the cytoplasm. The protein localises to the cytoskeleton. It is found in the microtubule organizing center. The protein resides in the centrosome. It localises to the centriole. Its subcellular location is the cell projection. The protein localises to the cilium. It is found in the cilium basal body. The protein resides in the cytoplasmic granule. It localises to the centriolar satellite. Functionally, involved in the biogenesis of cilia. Required for the recruitment of PLK1 to centrosomes and S phase progression. In Mus musculus (Mouse), this protein is Centrosomal protein 20.